Consider the following 452-residue polypeptide: Growth/differentiation factor 6 (452 aa).

Residues 1–22 (MDTPRVLLWAIFLISFLWDLPG) form the signal peptide. Positions 23–332 (FQQASISSSS…LPSPGRRRRR (310 aa)) are excised as a propeptide. The tract at residues 29–93 (SSSSSTELDS…QEPPGRGPRV (65 aa)) is disordered. Composition is skewed to basic and acidic residues over residues 37–46 (DSTKDVENRK) and 58–75 (AEGR…ELRR). N-linked (GlcNAc...) asparagine glycosylation occurs at Asn-115. Disordered regions lie at residues 244 to 267 (RDSG…LGFG) and 301 to 348 (AEAA…KKSR). Residues 301–317 (AEAAGAEGSWPAPSGAP) show a composition bias toward low complexity. The span at 327–348 (GRRRRRTALSSRHGKRHGKKSR) shows a compositional bias: basic residues. Cystine bridges form between Cys-351/Cys-417, Cys-380/Cys-449, and Cys-384/Cys-451.

Belongs to the TGF-beta family. In terms of assembly, homodimer; disulfide-linked.

The protein localises to the secreted. Functionally, growth factor that controls proliferation and cellular differentiation in the retina and bone formation. Plays a key role in regulating apoptosis during retinal development. Establishes dorsal-ventral positional information in the retina and controls the formation of the retinotectal map. Required for normal formation of bones and joints in the limbs, skull, digits and axial skeleton. Plays a key role in establishing boundaries between skeletal elements during development. Regulation of GDF6 expression seems to be a mechanism for evolving species-specific changes in skeletal structures. Seems to positively regulate differentiation of chondrogenic tissue through the growth factor receptors subunits BMPR1A, BMPR1B, BMPR2 and ACVR2A, leading to the activation of SMAD1-SMAD5-SMAD8 complex. The regulation of chondrogenic differentiation is inhibited by NOG. Also involved in the induction of adipogenesis from mesenchymal stem cells. This mechanism acts through the growth factor receptors subunits BMPR1A, BMPR2 and ACVR2A and the activation of SMAD1-SMAD5-SMAD8 complex and MAPK14/p38. This chain is Growth/differentiation factor 6 (Gdf6), found in Rattus norvegicus (Rat).